The chain runs to 363 residues: Protein-glutamate methylesterase/protein-glutamine glutaminase 2 (363 aa).

The region spanning 6–123 (RVLIVDDSAS…AQFLLESKIH (118 aa)) is the Response regulatory domain. D57 carries the 4-aspartylphosphate modification. Residues 172-363 (ARTTESVICI…AMEILRAGNR (192 aa)) form the CheB-type methylesterase domain. Residues S184, H210, and D306 contribute to the active site.

It belongs to the CheB family. Phosphorylated by CheA. Phosphorylation of the N-terminal regulatory domain activates the methylesterase activity.

Its subcellular location is the cytoplasm. It carries out the reaction [protein]-L-glutamate 5-O-methyl ester + H2O = L-glutamyl-[protein] + methanol + H(+). The catalysed reaction is L-glutaminyl-[protein] + H2O = L-glutamyl-[protein] + NH4(+). Functionally, involved in chemotaxis. Part of a chemotaxis signal transduction system that modulates chemotaxis in response to various stimuli. Catalyzes the demethylation of specific methylglutamate residues introduced into the chemoreceptors (methyl-accepting chemotaxis proteins or MCP) by CheR. Also mediates the irreversible deamidation of specific glutamine residues to glutamic acid. This Rhodospirillum rubrum (strain ATCC 11170 / ATH 1.1.1 / DSM 467 / LMG 4362 / NCIMB 8255 / S1) protein is Protein-glutamate methylesterase/protein-glutamine glutaminase 2.